A 532-amino-acid chain; its full sequence is GH3 domain-containing protein (532 aa).

A signal peptide spans 1-18; it reads MLLLWLLLLLLLLVPLLA. Positions 100–123 are disordered; that stretch reads LTQTSHTQEQESEETLPSPASPQY. 2 N-linked (GlcNAc...) asparagine glycosylation sites follow: N356 and N451.

The protein belongs to the GH3 family. Highly expressed in mammary tissues from mature virgins and at day 13 of pregnancy, and at lower level during lactation. Expressed at intermediate level in liver. Expressed at lower level in kidney, heart and brain.

Its subcellular location is the endoplasmic reticulum. The protein resides in the nucleus envelope. The sequence is that of GH3 domain-containing protein (Ghdc) from Mus musculus (Mouse).